A 58-amino-acid polypeptide reads, in one-letter code: U11-myrmicitoxin-Tb1a (58 aa).

The propeptide occupies 1–24 (LAMAMGDAVADAQARAMAAAYAIA). Cysteine 34 and cysteine 57 are joined by a disulfide.

It belongs to the formicidae venom precursor-01 superfamily. Expressed by the venom gland.

The protein localises to the secreted. Its subcellular location is the target cell membrane. Neurotoxin that causes irreversible rapid flaccid paralysis in blowflies and honeybees upon intrathoracic injection. Causes a quick and irreversible cytolytic effect (at 10 uM) indicating it possibly acts as a pore-forming peptide. Shows only weak effect on aphids (A.pisum) at high doses 24 hours post intrathoracic injection. In vitro, is not cytotoxic on the dipteran S2 Drosophila embryonic cell line. This Tetramorium bicarinatum (Tramp ant) protein is U11-myrmicitoxin-Tb1a.